The chain runs to 413 residues: Divalent metal cation transporter MntH (413 aa).

At 1–19 (MTDNRVENSSGRAARKLRL) the chain is on the cytoplasmic side. A helical membrane pass occupies residues 20 to 39 (ALMGPAFIAAIGYIDPGNFA). Topologically, residues 40-51 (TNIQAGASFGYQ) are periplasmic. Residues 52 to 71 (LLWVVVWANLMAMLIQILSA) traverse the membrane as a helical segment. The Cytoplasmic segment spans residues 72-95 (KLGIATGKNLAEQIRDHYPRPVVW). Residues 96-118 (FYWVQAEIIAMATDLAEFIGAAI) traverse the membrane as a helical segment. The Periplasmic portion of the chain corresponds to 119–125 (GFKLILG). The helical transmembrane segment at 126-145 (VSLLQGAVLTGIATFLILML) threads the bilayer. Over 146-155 (QRRGQKPLEK) the chain is Cytoplasmic. A helical membrane pass occupies residues 156–175 (VIGGLLLFVAAAYIVELFFS). Topologically, residues 176-196 (QPDMAQLGKGMVIPALPNPEA) are periplasmic. The helical transmembrane segment at 197–220 (VFLAAGVLGATIMPHVIYLHSSLT) threads the bilayer. Residues 221-238 (QHLHGGTRQQRYSATKWD) are Cytoplasmic-facing. The helical transmembrane segment at 239-258 (VAIAMTIAGFVNLAMMATAA) threads the bilayer. Over 259–276 (AAFHFSGHTGIADLDQAY) the chain is Periplasmic. A helical membrane pass occupies residues 277-297 (LTLEPLLSHAAATVFGLSLVA). Residues 298–327 (AGLSSTVVGTLAGQVVMQGFVRFHIPLWVR) lie on the Cytoplasmic side of the membrane. Residues 328-344 (RTITMLPSFIVILMGLD) form a helical membrane-spanning segment. The Periplasmic portion of the chain corresponds to 345-350 (PTRILV). A helical membrane pass occupies residues 351–370 (MSQVLLSFGIALALVPLLIF). The Cytoplasmic portion of the chain corresponds to 371-387 (TSNATLMGELVNTRRVK). A helical transmembrane segment spans residues 388–406 (QVGWIIVVLVVALNIWLLV). The Periplasmic portion of the chain corresponds to 407–413 (GTVMGLS).

This sequence belongs to the NRAMP family.

It localises to the cell inner membrane. Functionally, h(+)-stimulated, divalent metal cation uptake system. This chain is Divalent metal cation transporter MntH, found in Salmonella paratyphi C (strain RKS4594).